The chain runs to 855 residues: Protein KRI1 homolog (855 aa).

Disordered regions lie at residues Val47–Lys67, Lys82–Pro117, Glu130–Glu196, Ser312–Leu342, Tyr424–Asp453, and Lys589–Asn855. The segment covering Ser48–Val64 has biased composition (acidic residues). Residues Lys82–Thr91 show a composition bias toward basic and acidic residues. Phosphoserine occurs at positions 95, 97, 98, 137, and 138. The span at Glu160–Glu176 shows a compositional bias: basic and acidic residues. Position 179 is a phosphoserine (Ser179). Residues Arg307–Ala362 adopt a coiled-coil conformation. Over residues Cys441 to Tyr452 the composition is skewed to acidic residues. Over residues Val609 to Glu619 the composition is skewed to low complexity. A compositionally biased stretch (basic residues) spans Lys630 to Ala640. 2 stretches are compositionally biased toward basic and acidic residues: residues Val650 to Asp664 and Ser674 to Gln692. Composition is skewed to polar residues over residues Val720–Ser748, Ser756–Gln773, and Ala792–Pro805. Low complexity predominate over residues Lys812–Asn826. A compositionally biased stretch (basic residues) spans Arg842–Asn855.

The protein belongs to the KRI1 family.

The chain is Protein KRI1 homolog from Drosophila melanogaster (Fruit fly).